The following is a 762-amino-acid chain: 5-methyltetrahydropteroyltriglutamate--homocysteine methyltransferase (762 aa).

Residues 18–21 and Lys-112 each bind 5-methyltetrahydropteroyltri-L-glutamate; that span reads REWK. L-homocysteine is bound by residues 435–437 and Glu-488; that span reads IGS. L-methionine is bound by residues 435 to 437 and Glu-488; that span reads IGS. 5-methyltetrahydropteroyltri-L-glutamate contacts are provided by residues 519-520 and Trp-565; that span reads RC. Position 603 (Asp-603) interacts with L-homocysteine. Residue Asp-603 participates in L-methionine binding. Residue Glu-609 participates in 5-methyltetrahydropteroyltri-L-glutamate binding. Zn(2+) contacts are provided by His-645, Cys-647, and Glu-669. His-698 serves as the catalytic Proton donor. At Cys-719 the chain carries S-bacillithiol cysteine disulfide. Cys-730 provides a ligand contact to Zn(2+).

This sequence belongs to the vitamin-B12 independent methionine synthase family. Zn(2+) is required as a cofactor. In response to oxidative stress, Cys-719 can react with bacillithiol (BSH) to form mixed disulfides. S-bacillithiolation leads to loss of catalytic activity and methionine auxotrophy.

It catalyses the reaction 5-methyltetrahydropteroyltri-L-glutamate + L-homocysteine = tetrahydropteroyltri-L-glutamate + L-methionine. Its pathway is amino-acid biosynthesis; L-methionine biosynthesis via de novo pathway; L-methionine from L-homocysteine (MetE route): step 1/1. Its function is as follows. Catalyzes the transfer of a methyl group from 5-methyltetrahydrofolate to homocysteine resulting in methionine formation. This chain is 5-methyltetrahydropteroyltriglutamate--homocysteine methyltransferase, found in Bacillus subtilis (strain 168).